Consider the following 619-residue polypeptide: Telomere repeat-binding protein 3 (619 aa).

The region spanning 324-403 (VKLSIKSFRI…LDNLGFTLEP (80 aa)) is the Ubiquitin-like domain. Residues 504-563 (AQRRTRRPFSVTEVEALVQAVEELGTGRWRDVKLRAFEDADHRTYVDLKDKWKTLVHTAS) enclose the HTH myb-type domain. Positions 532–559 (WRDVKLRAFEDADHRTYVDLKDKWKTLV) form a DNA-binding region, H-T-H motif. The tract at residues 593-619 (QGKHQARGASKDPDMNRGGAFESGVSV) is disordered.

In terms of assembly, homodimer and heterodimer with TRP1. In terms of tissue distribution, expressed ubiquitously. Highest expression in flowers and roots.

Its subcellular location is the nucleus. Functionally, binds specifically to the plant telomeric double-stranded DNA sequences. At least 2 repeats of telomeric sequences are required for binding. Induces DNA bending. The protein is Telomere repeat-binding protein 3 (TRP3) of Arabidopsis thaliana (Mouse-ear cress).